Here is a 281-residue protein sequence, read N- to C-terminus: RNA polymerase sigma factor RpoH (281 aa).

Residues Leu-52–Arg-121 form a sigma-70 factor domain-2 region. The Interaction with polymerase core subunit RpoC signature appears at Asp-76–Gln-79. Residues Ala-226 to Ser-277 are sigma-70 factor domain-4. The H-T-H motif DNA-binding region spans Leu-250–Thr-269.

This sequence belongs to the sigma-70 factor family. RpoH subfamily. In terms of assembly, interacts with the RNA polymerase core enzyme.

It is found in the cytoplasm. Its function is as follows. Sigma factors are initiation factors that promote the attachment of RNA polymerase to specific initiation sites and are then released. This sigma factor is involved in regulation of expression of heat shock genes. This Haemophilus influenzae (strain ATCC 51907 / DSM 11121 / KW20 / Rd) protein is RNA polymerase sigma factor RpoH.